A 98-amino-acid chain; its full sequence is NADH dehydrogenase [ubiquinone] 1 beta subcomplex subunit 3 (98 aa).

N-acetylalanine is present on A2. Pros-methylhistidine is present on residues H5, H7, and H9. N6-acetyllysine; alternate is present on residues K23 and K34. K23 and K34 each carry N6-succinyllysine; alternate. Residues 66–88 traverse the membrane as a helical segment; sequence VFFKGFKWGFAAFVVAVGAEYYL.

The protein belongs to the complex I NDUFB3 subunit family. In terms of assembly, complex I is composed of 45 different subunits. In terms of processing, methylation at His residues by METTL9 enhances complex I-mediated mitochondrial respiration.

Its subcellular location is the mitochondrion inner membrane. Accessory subunit of the mitochondrial membrane respiratory chain NADH dehydrogenase (Complex I), that is believed not to be involved in catalysis. Complex I functions in the transfer of electrons from NADH to the respiratory chain. The immediate electron acceptor for the enzyme is believed to be ubiquinone. This is NADH dehydrogenase [ubiquinone] 1 beta subcomplex subunit 3 (NDUFB3) from Gorilla gorilla gorilla (Western lowland gorilla).